The sequence spans 332 residues: Junctional sarcoplasmic reticulum protein 1 (332 aa).

Residues 1–80 (MTTRGLEDLD…EKELAGKEST (80 aa)) are mediates interaction with CACNA1S. Disordered regions lie at residues 1–125 (MTTR…PWGD) and 159–332 (APHP…KGRD). A Phosphothreonine modification is found at Thr51. A compositionally biased stretch (basic and acidic residues) spans 66–76 (GLKKMEKELAG). Pro residues-rich tracts occupy residues 98–116 (QAPP…PPRT) and 177–197 (APKP…PGPP). The segment covering 221 to 232 (GGSISEASGEES) has biased composition (low complexity). Ser223 and Ser228 each carry phosphoserine. Basic and acidic residues-rich tracts occupy residues 239–256 (GSQE…EKLK) and 283–307 (RRWE…EHGK).

Interacts with CACNA1S, CACNB1 and calsequestrin. As to expression, specifically expressed in skeletal muscle. Detected in skeletal muscle and tongue (at protein level).

It localises to the sarcoplasmic reticulum membrane. Its subcellular location is the endoplasmic reticulum membrane. Its function is as follows. Involved in skeletal muscle excitation/contraction coupling (EC), probably acting as a regulator of the voltage-sensitive calcium channel CACNA1S. EC is a physiological process whereby an electrical signal (depolarization of the plasma membrane) is converted into a chemical signal, a calcium gradient, by the opening of ryanodine receptor calcium release channels. May regulate CACNA1S membrane targeting and activity. This chain is Junctional sarcoplasmic reticulum protein 1 (Jsrp1), found in Mus musculus (Mouse).